A 402-amino-acid polypeptide reads, in one-letter code: MKRLQAFKFQLRPGGQQECEMRRFAGACRFVFNRALARQNENHEAGNKYIPYGKMASWLVEWKNATETQWLKDSPSQPLQQSLKDLERAYKNFFRKRAAFPRFKKRGQNDAFRYPQGVKLDQENSRIFLPKLGWMRYRNSRQVTGVVKNVTVSQSCGKWYISIQTESEVSTPVHPSASMVGLDAGVAKLATLSDGTVFEPVNSFQKNQKKLARLQRQLSRKVKFSNNWQKQKRKIQRLHSCIANIRRDYLHKVTTAVSKNHAMIVIEDLKVSNMSKSAAGTVSQPGRNVRAKSGLNRSILDQGWYEMRRQLAYKQLWRGGQVLAVPPAYTSQRCAYCGHTAKENRLSQSKFRCQVCGYTANADVNGARNILAAGHAVLACGEMVQSGRPLKQEPTEMIQATA.

Catalysis depends on residues Asp183 and Glu267. Zn(2+) is bound by residues Cys334, Cys337, Cys353, and Cys356. Asp363 is an active-site residue.

This sequence in the N-terminal section; belongs to the transposase 2 family. In the C-terminal section; belongs to the transposase 35 family.

Functionally, an RNA-guided dsDNA endonuclease. When guided by an RNA derived from the right-end element of its insertion sequence element (IS), cleaves DNA downstream of the transposon-associated motif (TAM). Cleaves supercoiled and linear DNA in a staggered manner 15-21 bases from the TAM yielding 5'-overhangs. Binds reRNA, an approximately 150 nucleotide base sRNA derived from the 3' end of its own gene, the right end (RE) of the insertion sequence (IS) plus sequence downstream of the IS. Its function is as follows. Not required for transposition of the insertion element. The corresponding transposase in strains MG1655 and W3110 is a truncated pseudogene (yncK). This Escherichia coli (strain K12) protein is Putative RNA-guided DNA endonuclease InsQ (insQ).